The following is a 172-amino-acid chain: Translation initiation factor IF-3 (172 aa).

It belongs to the IF-3 family. Monomer.

It is found in the cytoplasm. Its function is as follows. IF-3 binds to the 30S ribosomal subunit and shifts the equilibrium between 70S ribosomes and their 50S and 30S subunits in favor of the free subunits, thus enhancing the availability of 30S subunits on which protein synthesis initiation begins. The sequence is that of Translation initiation factor IF-3 from Geobacter sulfurreducens (strain ATCC 51573 / DSM 12127 / PCA).